The primary structure comprises 155 residues: Small ribosomal subunit protein uS7 (155 aa).

It belongs to the universal ribosomal protein uS7 family. As to quaternary structure, part of the 30S ribosomal subunit. Contacts proteins S9 and S11.

Functionally, one of the primary rRNA binding proteins, it binds directly to 16S rRNA where it nucleates assembly of the head domain of the 30S subunit. Is located at the subunit interface close to the decoding center, probably blocks exit of the E-site tRNA. The protein is Small ribosomal subunit protein uS7 of Chlorobium phaeobacteroides (strain BS1).